The sequence spans 382 residues: Acetylornithine deacetylase (382 aa).

His-79 contacts Zn(2+). The active site involves Asp-81. Residue Asp-111 coordinates Zn(2+). Glu-143 is an active-site residue. Residues Glu-144, Glu-168, and His-354 each contribute to the Zn(2+) site.

It belongs to the peptidase M20A family. ArgE subfamily. In terms of assembly, homodimer. Zn(2+) is required as a cofactor. Requires Co(2+) as cofactor. It depends on glutathione as a cofactor.

It localises to the cytoplasm. It carries out the reaction N(2)-acetyl-L-ornithine + H2O = L-ornithine + acetate. It functions in the pathway amino-acid biosynthesis; L-arginine biosynthesis; L-ornithine from N(2)-acetyl-L-ornithine (linear): step 1/1. Functionally, catalyzes the hydrolysis of the amide bond of N(2)-acetylated L-amino acids. Cleaves the acetyl group from N-acetyl-L-ornithine to form L-ornithine, an intermediate in L-arginine biosynthesis pathway, and a branchpoint in the synthesis of polyamines. This Pasteurella multocida (strain Pm70) protein is Acetylornithine deacetylase.